Here is a 154-residue protein sequence, read N- to C-terminus: 3-hydroxyacyl-[acyl-carrier-protein] dehydratase FabZ (154 aa).

His55 is a catalytic residue.

It belongs to the thioester dehydratase family. FabZ subfamily.

It localises to the cytoplasm. It catalyses the reaction a (3R)-hydroxyacyl-[ACP] = a (2E)-enoyl-[ACP] + H2O. Involved in unsaturated fatty acids biosynthesis. Catalyzes the dehydration of short chain beta-hydroxyacyl-ACPs and long chain saturated and unsaturated beta-hydroxyacyl-ACPs. The protein is 3-hydroxyacyl-[acyl-carrier-protein] dehydratase FabZ of Oleidesulfovibrio alaskensis (strain ATCC BAA-1058 / DSM 17464 / G20) (Desulfovibrio alaskensis).